Reading from the N-terminus, the 418-residue chain is Probable cysteine desulfurase 2 (418 aa).

K234 bears the N6-(pyridoxal phosphate)lysine mark. Residue C374 is the Cysteine persulfide intermediate of the active site.

This sequence belongs to the class-V pyridoxal-phosphate-dependent aminotransferase family. Csd subfamily. Pyridoxal 5'-phosphate serves as cofactor.

It catalyses the reaction (sulfur carrier)-H + L-cysteine = (sulfur carrier)-SH + L-alanine. Functionally, catalyzes the removal of elemental sulfur and selenium atoms from L-cysteine, L-cystine, L-selenocysteine, and L-selenocystine to produce L-alanine. The polypeptide is Probable cysteine desulfurase 2 (csd2) (Mycobacterium leprae (strain TN)).